A 119-amino-acid chain; its full sequence is uncharacterized protein (119 aa).

A coiled-coil region spans residues Q6 to L36. The interval A95 to G119 is disordered.

This is an uncharacterized protein from Frog virus 3 (isolate Goorha) (FV-3).